We begin with the raw amino-acid sequence, 101 residues long: Small ribosomal subunit protein uS14 (101 aa).

Belongs to the universal ribosomal protein uS14 family. Part of the 30S ribosomal subunit. Contacts proteins S3 and S10.

Its function is as follows. Binds 16S rRNA, required for the assembly of 30S particles and may also be responsible for determining the conformation of the 16S rRNA at the A site. In Corynebacterium efficiens (strain DSM 44549 / YS-314 / AJ 12310 / JCM 11189 / NBRC 100395), this protein is Small ribosomal subunit protein uS14.